The following is a 952-amino-acid chain: DNA topoisomerase 1 (952 aa).

Residues 12–135 (RRLVIVESPA…VKRMVFHEIT (124 aa)) form the Toprim domain. Positions 18 and 104 each coordinate Mg(2+). A Topo IA-type catalytic domain is found at 150 to 602 (NQKLVDAQET…RFYFGEGDGT (453 aa)). The tract at residues 184 to 189 (SAGRVQ) is interaction with DNA. The active-site O-(5'-phospho-DNA)-tyrosine intermediate is the tyrosine 334. The interval 847 to 952 (RFGPYVTDGE…KATASKTSED (106 aa)) is disordered. Over residues 871 to 884 (TPERGYELLAEKRA) the composition is skewed to basic and acidic residues. The span at 885–906 (KGPAKKTAKKAVKKTAAKKAPA) shows a compositional bias: basic residues. Low complexity-rich tracts occupy residues 907–930 (KKAA…AAKS) and 937–952 (AKTA…TSED).

It belongs to the type IA topoisomerase family. Monomer. Mg(2+) is required as a cofactor.

It carries out the reaction ATP-independent breakage of single-stranded DNA, followed by passage and rejoining.. In terms of biological role, releases the supercoiling and torsional tension of DNA, which is introduced during the DNA replication and transcription, by transiently cleaving and rejoining one strand of the DNA duplex. Introduces a single-strand break via transesterification at a target site in duplex DNA. The scissile phosphodiester is attacked by the catalytic tyrosine of the enzyme, resulting in the formation of a DNA-(5'-phosphotyrosyl)-enzyme intermediate and the expulsion of a 3'-OH DNA strand. The free DNA strand then undergoes passage around the unbroken strand, thus removing DNA supercoils. Finally, in the religation step, the DNA 3'-OH attacks the covalent intermediate to expel the active-site tyrosine and restore the DNA phosphodiester backbone. Functionally, relaxes supercoiled plasmid in vitro; in the presence of sIHF (integration host factor) relaxation is decreased. In Streptomyces coelicolor (strain ATCC BAA-471 / A3(2) / M145), this protein is DNA topoisomerase 1.